The sequence spans 807 residues: Glycerol-3-phosphate acyltransferase (807 aa).

The short motif at C308 to M313 is the HXXXXD motif element.

It belongs to the GPAT/DAPAT family.

It is found in the cell inner membrane. The enzyme catalyses sn-glycerol 3-phosphate + an acyl-CoA = a 1-acyl-sn-glycero-3-phosphate + CoA. The protein operates within phospholipid metabolism; CDP-diacylglycerol biosynthesis; CDP-diacylglycerol from sn-glycerol 3-phosphate: step 1/3. In Shewanella sp. (strain ANA-3), this protein is Glycerol-3-phosphate acyltransferase.